A 269-amino-acid chain; its full sequence is Glutamate racemase (269 aa).

Substrate contacts are provided by residues 7-8 (DS) and 39-40 (YG). Residue C70 is the Proton donor/acceptor of the active site. 71–72 (NT) is a binding site for substrate. C194 serves as the catalytic Proton donor/acceptor. Position 195 to 196 (195 to 196 (TH)) interacts with substrate.

The protein belongs to the aspartate/glutamate racemases family.

The enzyme catalyses L-glutamate = D-glutamate. Its pathway is cell wall biogenesis; peptidoglycan biosynthesis. In terms of biological role, provides the (R)-glutamate required for cell wall biosynthesis. The polypeptide is Glutamate racemase (Ruegeria sp. (strain TM1040) (Silicibacter sp.)).